The sequence spans 447 residues: Argininosuccinate synthase (447 aa).

Residues 12 to 20 (AYSGGLDTS) and A39 each bind ATP. L-citrulline is bound by residues Y92 and S97. G122 is an ATP binding site. L-aspartate contacts are provided by T124, N128, and D129. N128 serves as a coordination point for L-citrulline. Residues R132, S182, S191, E267, and Y279 each coordinate L-citrulline.

It belongs to the argininosuccinate synthase family. Type 1 subfamily. In terms of assembly, homotetramer.

The protein resides in the cytoplasm. The catalysed reaction is L-citrulline + L-aspartate + ATP = 2-(N(omega)-L-arginino)succinate + AMP + diphosphate + H(+). Its pathway is amino-acid biosynthesis; L-arginine biosynthesis; L-arginine from L-ornithine and carbamoyl phosphate: step 2/3. This is Argininosuccinate synthase from Sulfurovum sp. (strain NBC37-1).